A 543-amino-acid polypeptide reads, in one-letter code: Chaperonin GroEL 1 (543 aa).

ATP-binding positions include 29–32 (TLGP), 86–90 (DGTTT), glycine 413, 479–481 (NAA), and aspartate 495. The segment at 524 to 543 (PEPKDAAPAGVGGGGGDFDY) is disordered. Positions 533–543 (GVGGGGGDFDY) are enriched in gly residues.

It belongs to the chaperonin (HSP60) family. In terms of assembly, forms a cylinder of 14 subunits composed of two heptameric rings stacked back-to-back. Interacts with the co-chaperonin GroES.

The protein localises to the cytoplasm. The catalysed reaction is ATP + H2O + a folded polypeptide = ADP + phosphate + an unfolded polypeptide.. Functionally, together with its co-chaperonin GroES, plays an essential role in assisting protein folding. The GroEL-GroES system forms a nano-cage that allows encapsulation of the non-native substrate proteins and provides a physical environment optimized to promote and accelerate protein folding. The protein is Chaperonin GroEL 1 of Anabaena sp. (strain L31).